A 172-amino-acid polypeptide reads, in one-letter code: MTYYNVGKIVNTQGLQGELRVLSVTDFADERFKKKSVLALFDDKDNYIMDVEVASHRKHKNFDIVKFKGLYHINDVEKYKGCSLKIAEENLTDLDDGEFYYHEIIGLDVYEGNTLIGQVKEILQPGANDVWVVKRKGKKDLLLPYIPPVVLDVDVAAGRIEVELMEGLDDED.

In terms of domain architecture, PRC barrel spans 96-168 (DGEFYYHEII…RIEVELMEGL (73 aa)).

This sequence belongs to the RimM family. Binds ribosomal protein uS19.

It localises to the cytoplasm. Its function is as follows. An accessory protein needed during the final step in the assembly of 30S ribosomal subunit, possibly for assembly of the head region. Essential for efficient processing of 16S rRNA. May be needed both before and after RbfA during the maturation of 16S rRNA. It has affinity for free ribosomal 30S subunits but not for 70S ribosomes. The chain is Ribosome maturation factor RimM from Streptococcus thermophilus (strain CNRZ 1066).